Reading from the N-terminus, the 87-residue chain is MVKNSVISVISQEEKKGSVEFQVFNFTNKIRRLTSHLELHKKDYLSQRGLKKILGKRQRLLAYLAKKNRVRYKELINRLDIRETKTR.

The protein belongs to the universal ribosomal protein uS15 family. Part of the 30S ribosomal subunit.

The protein localises to the plastid. Its subcellular location is the chloroplast. In Solanum lycopersicum (Tomato), this protein is Small ribosomal subunit protein uS15c (rps15).